We begin with the raw amino-acid sequence, 164 residues long: Ribosome maturation factor RimP (164 aa).

Belongs to the RimP family.

The protein localises to the cytoplasm. In terms of biological role, required for maturation of 30S ribosomal subunits. The chain is Ribosome maturation factor RimP from Mycoplasma mycoides subsp. mycoides SC (strain CCUG 32753 / NCTC 10114 / PG1).